The primary structure comprises 339 residues: Cyclin-Y-like protein 1-A (339 aa).

The span at 1-13 shows a compositional bias: polar residues; the sequence is MGNTVTCCVSPDS. Residues 1–42 are disordered; that stretch reads MGNTVTCCVSPDSSPKEGRDREVTESGEPYQAQGEPQDGDVQ. Positions 14–24 are enriched in basic and acidic residues; sequence SPKEGRDREVT. The Cyclin N-terminal domain maps to 141 to 263; sequence DIFDEKLHPI…FLELLQFNIN (123 aa).

The protein belongs to the cyclin family. Cyclin Y subfamily.

The chain is Cyclin-Y-like protein 1-A (ccnyl1-a) from Xenopus laevis (African clawed frog).